The following is a 434-amino-acid chain: Mannose-6-phosphate isomerase (434 aa).

Zn(2+) is bound by residues Gln-109, His-111, and Glu-136. Residues 181-191 (SLGLPTSQPPD) show a composition bias toward polar residues. The interval 181 to 200 (SLGLPTSQPPDTSLFKPTES) is disordered. Residue His-291 coordinates Zn(2+). Residue Arg-310 is part of the active site.

It belongs to the mannose-6-phosphate isomerase type 1 family. Requires Zn(2+) as cofactor.

The protein resides in the cytoplasm. The catalysed reaction is D-mannose 6-phosphate = D-fructose 6-phosphate. Its pathway is nucleotide-sugar biosynthesis; GDP-alpha-D-mannose biosynthesis; alpha-D-mannose 1-phosphate from D-fructose 6-phosphate: step 1/2. In terms of biological role, involved in the synthesis of the GDP-mannose and dolichol-phosphate-mannose required for a number of critical mannosyl transfer reactions. This chain is Mannose-6-phosphate isomerase (MAN1), found in Cryptococcus neoformans var. neoformans serotype D (strain JEC21 / ATCC MYA-565) (Filobasidiella neoformans).